A 264-amino-acid chain; its full sequence is Thymidylate synthase (264 aa).

Arg21 serves as a coordination point for dUMP. His51 contacts (6R)-5,10-methylene-5,6,7,8-tetrahydrofolate. Residue 126–127 (RR) participates in dUMP binding. Residue Cys146 is the Nucleophile of the active site. DUMP is bound by residues 166–169 (RSAD), Asn177, and 207–209 (HLY). Asp169 serves as a coordination point for (6R)-5,10-methylene-5,6,7,8-tetrahydrofolate. Ala263 lines the (6R)-5,10-methylene-5,6,7,8-tetrahydrofolate pocket.

This sequence belongs to the thymidylate synthase family. Bacterial-type ThyA subfamily. As to quaternary structure, homodimer.

It is found in the cytoplasm. The enzyme catalyses dUMP + (6R)-5,10-methylene-5,6,7,8-tetrahydrofolate = 7,8-dihydrofolate + dTMP. It functions in the pathway pyrimidine metabolism; dTTP biosynthesis. Its function is as follows. Catalyzes the reductive methylation of 2'-deoxyuridine-5'-monophosphate (dUMP) to 2'-deoxythymidine-5'-monophosphate (dTMP) while utilizing 5,10-methylenetetrahydrofolate (mTHF) as the methyl donor and reductant in the reaction, yielding dihydrofolate (DHF) as a by-product. This enzymatic reaction provides an intracellular de novo source of dTMP, an essential precursor for DNA biosynthesis. In Bartonella tribocorum (strain CIP 105476 / IBS 506), this protein is Thymidylate synthase.